We begin with the raw amino-acid sequence, 323 residues long: MDTRGVAAAMRPLVLLVAFLCTAAPALDTCPEVKVVGLEGSDKLSILRGCPGLPGAAGPKGEAGASGPKGGQGPPGAPGEPGPPGPKGDRGEKGEPGPKGESWETEQCLTGPRTCKELLTRGHILSGWHTIYLPDCQPLTVLCDMDTDGGGWTVFQRRSDGSVDFYRDWAAYKRGFGSQLGEFWLGNDHIHALTAQGTNELRVDLVDFEGNHQFAKYRSFQVADEAEKYMLVLGAFVEGNAGDSLTSHNNSLFTTKDQDNDQYASNCAVLYQGAWWYNSCHVSNLNGRYLGGSHGSFANGVNWSSGKGYNYSYKVSEMKFRAT.

An N-terminal signal peptide occupies residues 1–26; that stretch reads MDTRGVAAAMRPLVLLVAFLCTAAPA. Residues 52–102 form the Collagen-like domain; it reads GLPGAAGPKGEAGASGPKGGQGPPGAPGEPGPPGPKGDRGEKGEPGPKGES. Residues 55–66 are compositionally biased toward low complexity; it reads GAAGPKGEAGAS. Residues 55-107 form a disordered region; that stretch reads GAAGPKGEAGASGPKGGQGPPGAPGEPGPPGPKGDRGEKGEPGPKGESWETEQ. Over residues 75 to 86 the composition is skewed to pro residues; that stretch reads PGAPGEPGPPGP. Basic and acidic residues predominate over residues 87 to 102; it reads KGDRGEKGEPGPKGES. Residues 106–323 form the Fibrinogen C-terminal domain; that stretch reads EQCLTGPRTC…KVSEMKFRAT (218 aa). 2 disulfide bridges follow: Cys-108–Cys-136 and Cys-115–Cys-143. Residue Asn-249 is glycosylated (N-linked (GlcNAc...) asparagine). Ca(2+) is bound by residues Asp-259, Asp-261, and Ser-265. A disulfide bridge connects residues Cys-267 and Cys-280. N-linked (GlcNAc...) asparagine glycosylation is found at Asn-302 and Asn-310.

The protein belongs to the ficolin lectin family. As to quaternary structure, homotrimer. Interacts with elastin. Interacts with MASP1 and MASP2. Mainly expressed in skeletal muscle.

The protein localises to the secreted. Functionally, may function in innate immunity through activation of the lectin complement pathway. Calcium-dependent and GlcNAc-binding lectin. The protein is Ficolin-2 (FCN2) of Sus scrofa (Pig).